The following is an 89-amino-acid chain: NADH-ubiquinone oxidoreductase chain 4L (89 aa).

The next 3 helical transmembrane spans lie at 1 to 21, 22 to 42, and 55 to 75; these read MNFSIFLFLIGILGFVLNRKN, IILMLISIEIMLLAITFLILI, and FAIYIITIAGAESAIGLGILV.

The protein belongs to the complex I subunit 4L family.

Its subcellular location is the mitochondrion membrane. The catalysed reaction is a ubiquinone + NADH + 5 H(+)(in) = a ubiquinol + NAD(+) + 4 H(+)(out). Functionally, core subunit of the mitochondrial membrane respiratory chain NADH dehydrogenase (Complex I) that is believed to belong to the minimal assembly required for catalysis. Complex I functions in the transfer of electrons from NADH to the respiratory chain. The immediate electron acceptor for the enzyme is believed to be ubiquinone. The chain is NADH-ubiquinone oxidoreductase chain 4L (nd4L) from Talaromyces marneffei (Penicillium marneffei).